The following is a 156-amino-acid chain: Ribosomal RNA large subunit methyltransferase H (156 aa).

S-adenosyl-L-methionine contacts are provided by residues L73, G104, and 123–128 (LSSLTL).

This sequence belongs to the RNA methyltransferase RlmH family. As to quaternary structure, homodimer.

It localises to the cytoplasm. The catalysed reaction is pseudouridine(1915) in 23S rRNA + S-adenosyl-L-methionine = N(3)-methylpseudouridine(1915) in 23S rRNA + S-adenosyl-L-homocysteine + H(+). Its function is as follows. Specifically methylates the pseudouridine at position 1915 (m3Psi1915) in 23S rRNA. The chain is Ribosomal RNA large subunit methyltransferase H from Ralstonia nicotianae (strain ATCC BAA-1114 / GMI1000) (Ralstonia solanacearum).